We begin with the raw amino-acid sequence, 497 residues long: Cobyric acid synthase (497 aa).

One can recognise a GATase cobBQ-type domain in the interval 250 to 445; it reads EVTIAVIRLP…LHGIFNNGPW (196 aa). Residue C331 is the Nucleophile of the active site. H437 is a catalytic residue.

It belongs to the CobB/CobQ family. CobQ subfamily.

The protein operates within cofactor biosynthesis; adenosylcobalamin biosynthesis. Functionally, catalyzes amidations at positions B, D, E, and G on adenosylcobyrinic A,C-diamide. NH(2) groups are provided by glutamine, and one molecule of ATP is hydrogenolyzed for each amidation. The chain is Cobyric acid synthase from Acaryochloris marina (strain MBIC 11017).